Here is a 211-residue protein sequence, read N- to C-terminus: Redox-sensing transcriptional repressor Rex (211 aa).

Positions 17-56 form a DNA-binding region, H-T-H motif; sequence KYHRYLEELLRNEVDRISSKELSKKIGFTASQIRQDFNCF. 91-96 contacts NAD(+); it reads GGGNIG.

Belongs to the transcriptional regulatory Rex family. Homodimer.

The protein localises to the cytoplasm. Its function is as follows. Modulates transcription in response to changes in cellular NADH/NAD(+) redox state. The polypeptide is Redox-sensing transcriptional repressor Rex (Clostridium tetani (strain Massachusetts / E88)).